The chain runs to 239 residues: MEKDKVFAKPIEKRFEFDEEVASVFDDMIARSVPFYKENMALVRDIVVKNVVQKDRVYDLGCSTGSLLIDIAKRSPFSLELIGLDSSEAMLQRAHHKAKAFGVSIDFQKADIISYAYKPAKIFISNYTLQFIRPLKREPLVQKIYDALVDEGIFVFSEKVISADKTLDKQLLDIYFDFKKKQGYSDFEIAQKREALENVLVPYTLEENMEMVKKCGFGFVEPIFRWANFVTFVAIKRKK.

S-adenosyl-L-methionine is bound by residues Tyr36, Gly61–Ser63, Asp111–Ile112, Asn126, and Arg193.

Belongs to the class I-like SAM-binding methyltransferase superfamily. Cx-SAM synthase family. As to quaternary structure, homodimer.

It carries out the reaction prephenate + S-adenosyl-L-methionine = carboxy-S-adenosyl-L-methionine + 3-phenylpyruvate + H2O. Its function is as follows. Catalyzes the conversion of S-adenosyl-L-methionine (SAM) to carboxy-S-adenosyl-L-methionine (Cx-SAM). This is Carboxy-S-adenosyl-L-methionine synthase from Nitratiruptor sp. (strain SB155-2).